Here is a 171-residue protein sequence, read N- to C-terminus: Secretion monitor (171 aa).

A signal peptide spans 1 to 36 (MIGILNRWRQFGRRYFWPHLLLGMVAASLGLPTSLN).

Belongs to the SecM family.

The protein localises to the cytoplasm. The protein resides in the cytosol. It is found in the periplasm. Regulates secA expression by translational coupling of the secM secA operon. Translational pausing at a specific Pro residue 5 residues before the end of the protein may allow disruption of a mRNA repressor helix that normally suppresses secA translation initiation. In Pectobacterium carotovorum subsp. carotovorum (strain PC1), this protein is Secretion monitor.